The sequence spans 496 residues: Glycerol kinase (496 aa).

Thr-12 serves as a coordination point for ADP. The ATP site is built by Thr-12, Thr-13, and Ser-14. Thr-12 serves as a coordination point for sn-glycerol 3-phosphate. Arg-16 contacts ADP. Residues Arg-82, Glu-83, and Tyr-134 each coordinate sn-glycerol 3-phosphate. Glycerol-binding residues include Arg-82, Glu-83, and Tyr-134. His-230 is modified (phosphohistidine; by HPr). Asp-244 serves as a coordination point for sn-glycerol 3-phosphate. Residues Asp-244 and Gln-245 each contribute to the glycerol site. ADP is bound by residues Thr-266 and Gly-309. ATP is bound by residues Thr-266, Gly-309, Gln-313, and Gly-410. ADP contacts are provided by Gly-410 and Asn-414.

It belongs to the FGGY kinase family. Homotetramer and homodimer (in equilibrium). In terms of processing, the phosphoenolpyruvate-dependent sugar phosphotransferase system (PTS), including enzyme I, and histidine-containing protein (HPr) are required for the phosphorylation, which leads to the activation of the enzyme.

It carries out the reaction glycerol + ATP = sn-glycerol 3-phosphate + ADP + H(+). It functions in the pathway polyol metabolism; glycerol degradation via glycerol kinase pathway; sn-glycerol 3-phosphate from glycerol: step 1/1. Activated by phosphorylation and inhibited by fructose 1,6-bisphosphate (FBP). Key enzyme in the regulation of glycerol uptake and metabolism. Catalyzes the phosphorylation of glycerol to yield sn-glycerol 3-phosphate. The sequence is that of Glycerol kinase from Bacillus thuringiensis (strain Al Hakam).